A 199-amino-acid chain; its full sequence is Golgi to ER traffic protein 1 (199 aa).

The Lumenal segment spans residues 1-11 (MLLPDLHPYTI). The chain crosses the membrane as a helical span at residues 12 to 31 (LLSIFIVLLLKQLVASIGKS). Residues 32–115 (TIKEFVWLVY…SIDKVSNALL (84 aa)) are Cytoplasmic-facing. Residues 66–116 (EKRAISAQDEYAKWTKLNRQADKLSAELQKLNQEIQQQKASIDKVSNALLL) are a coiled coil. The helical transmembrane segment at 116-136 (LVLTTLPIWVARVLYRNTHLF) threads the bilayer. At 137 to 160 (YIRQGIFPKYVEWVLALPFLPNGA) the chain is on the lumenal side. Residues 161-177 (VGLTIWMFAVNSVVSNF) form a helical membrane-spanning segment. The Cytoplasmic segment spans residues 178 to 199 (AFLVSFPFAKKVSKPVRDTKIE).

Belongs to the WRB/GET1 family. Component of the Golgi to ER traffic (GET) complex, which is composed of GET1, GET2 and GET3. Within the complex, GET1 and GET2 form a heterotetramer which is stabilized by phosphatidylinositol binding and which binds to the GET3 homodimer.

It is found in the endoplasmic reticulum membrane. The protein localises to the golgi apparatus membrane. In terms of biological role, required for the post-translational delivery of tail-anchored (TA) proteins to the endoplasmic reticulum. Together with GET2, acts as a membrane receptor for soluble GET3, which recognizes and selectively binds the transmembrane domain of TA proteins in the cytosol. The GET complex cooperates with the HDEL receptor ERD2 to mediate the ATP-dependent retrieval of resident ER proteins that contain a C-terminal H-D-E-L retention signal from the Golgi to the ER. This is Golgi to ER traffic protein 1 from Candida dubliniensis (strain CD36 / ATCC MYA-646 / CBS 7987 / NCPF 3949 / NRRL Y-17841) (Yeast).